A 214-amino-acid chain; its full sequence is Cytochrome b (214 aa).

Helical transmembrane passes span 31–51 (FGSMLLACLMIQTVTGFFLAI), 75–96 (WIMQNTHAIGASMFFMCIYTHI), 111–131 (WLSGTTLLIVLMRTAFFGYVL), and 176–196 (FFALHFILPFIIISLSSIHII). Positions 81 and 95 each coordinate heme b. Positions 180 and 194 each coordinate heme b. Position 199 (histidine 199) interacts with a ubiquinone.

It belongs to the cytochrome b family. As to quaternary structure, the cytochrome bc1 complex contains 3 respiratory subunits (MT-CYB, CYC1 and UQCRFS1), 2 core proteins (UQCRC1 and UQCRC2) and probably 6 low-molecular weight proteins. Heme b serves as cofactor.

Its subcellular location is the mitochondrion inner membrane. Functionally, component of the ubiquinol-cytochrome c reductase complex (complex III or cytochrome b-c1 complex) that is part of the mitochondrial respiratory chain. The b-c1 complex mediates electron transfer from ubiquinol to cytochrome c. Contributes to the generation of a proton gradient across the mitochondrial membrane that is then used for ATP synthesis. The polypeptide is Cytochrome b (MT-CYB) (Cerastes cerastes (Horned desert viper)).